Consider the following 33-residue polypeptide: Brevinin-2HSb (33 aa).

Cysteine 27 and cysteine 33 are oxidised to a cystine.

As to expression, expressed by the skin glands.

It is found in the secreted. Has antibacterial activity against the Gram-positive bacterium S.aureus ATCC 25923 and the Gram-negative bacterium E.coli ATCC 25726. This chain is Brevinin-2HSb, found in Odorrana hosii (Hose's rock frog).